The following is a 1127-amino-acid chain: Disease resistance protein RPS6 (1127 aa).

Methionine 1 carries the post-translational modification N-acetylmethionine. The 165-residue stretch at 12 to 176 folds into the TIR domain; that stretch reads WSYHVFPSFS…EIANDILGKM (165 aa). The active site involves glutamate 87. LRR repeat units follow at residues 197–221, 540–563, 587–609, 610–632, 633–656, 658–679, 680–704, 766–790, 791–813, 814–834, and 835–857; these read MSSL…GIGK, IDET…LFLK, PSRL…NFHP, ENLV…VHSL, AGLR…SMAT, LETL…IQYL, NKLN…NLKS, SPTL…IQNL, YQLE…GINL, DSLI…PDIS, and TNIS…IEKL.

In terms of assembly, interacts with EDS1. In terms of tissue distribution, ubiquitous.

It catalyses the reaction NAD(+) + H2O = ADP-D-ribose + nicotinamide + H(+). Disease resistance (R) protein that specifically recognizes the hopA1 type III effector avirulence protein from Pseudomonas syringae. Resistance proteins guard the plant against pathogens that contain an appropriate avirulence protein via an indirect interaction with this avirulence protein. That triggers a defense system including the hypersensitive response, which restricts the pathogen growth. The sequence is that of Disease resistance protein RPS6 from Arabidopsis thaliana (Mouse-ear cress).